Here is a 171-residue protein sequence, read N- to C-terminus: Adenine phosphoribosyltransferase (171 aa).

The protein belongs to the purine/pyrimidine phosphoribosyltransferase family. Homodimer.

It localises to the cytoplasm. The enzyme catalyses AMP + diphosphate = 5-phospho-alpha-D-ribose 1-diphosphate + adenine. The protein operates within purine metabolism; AMP biosynthesis via salvage pathway; AMP from adenine: step 1/1. Functionally, catalyzes a salvage reaction resulting in the formation of AMP, that is energically less costly than de novo synthesis. The polypeptide is Adenine phosphoribosyltransferase (Shouchella clausii (strain KSM-K16) (Alkalihalobacillus clausii)).